Reading from the N-terminus, the 304-residue chain is uncharacterized protein (304 aa).

The protein belongs to the mimivirus L137 family.

This is an uncharacterized protein from Acanthamoeba polyphaga mimivirus (APMV).